The sequence spans 150 residues: Ribosome maturation factor RimP (150 aa).

It belongs to the RimP family.

Its subcellular location is the cytoplasm. Functionally, required for maturation of 30S ribosomal subunits. The protein is Ribosome maturation factor RimP of Acidithiobacillus ferrooxidans (strain ATCC 23270 / DSM 14882 / CIP 104768 / NCIMB 8455) (Ferrobacillus ferrooxidans (strain ATCC 23270)).